We begin with the raw amino-acid sequence, 494 residues long: Ribose import ATP-binding protein RbsA (494 aa).

ABC transporter domains follow at residues 3–240 and 250–494; these read IEMK…VGRS and SQIS…TGGE. ATP is bound at residue 35–42; it reads GENGAGKS.

It belongs to the ABC transporter superfamily. Ribose importer (TC 3.A.1.2.1) family. As to quaternary structure, the complex is composed of an ATP-binding protein (RbsA), two transmembrane proteins (RbsC) and a solute-binding protein (RbsB).

The protein resides in the cell membrane. It catalyses the reaction D-ribose(out) + ATP + H2O = D-ribose(in) + ADP + phosphate + H(+). Part of the ABC transporter complex RbsABC involved in ribose import. Responsible for energy coupling to the transport system. The chain is Ribose import ATP-binding protein RbsA from Bacillus cereus (strain ZK / E33L).